The sequence spans 451 residues: POU domain, class 3, transcription factor 1 (451 aa).

5 disordered regions span residues 1–21 (MATT…GTGP), 69–114 (AHPQ…GFHA), 127–154 (AWAQ…HQPQ), 186–253 (GLHH…PSSD), and 395–451 (KRMT…GSVQ). Gly residues-rich tracts occupy residues 11–20 (GPGGGAGGTG), 76–85 (TGGGGGGDWA), and 95–112 (AGGG…GGGF). A compositionally biased stretch (basic and acidic residues) spans 190–199 (ALHEDGHEAQ). Positions 220 to 232 (AGGLHAAAAHLHP) are enriched in low complexity. Positions 247–321 (EDAPSSDDLE…LLNKWLEETD (75 aa)) constitute a POU-specific domain. The homeobox DNA-binding region spans 339-398 (KRKKRTSIEVGVKGALESHFLKCPKPSAHEITGLADSLQLEKEVVRVWFCNRRQKEKRMT). The segment covering 427–436 (PSAPPPPPPA) has biased composition (pro residues).

The protein belongs to the POU transcription factor family. Class-3 subfamily. As to expression, expressed in embryonal stem cells and in the developing brain.

It localises to the nucleus. Its function is as follows. Transcription factor that binds to the octamer motif (5'-ATTTGCAT-3'). Acts as a transcriptional activator when binding cooperatively with SOX4, SOX11, or SOX12 to gene promoters. Acts as a transcriptional repressor of myelin-specific genes. The protein is POU domain, class 3, transcription factor 1 (POU3F1) of Homo sapiens (Human).